Consider the following 280-residue polypeptide: Proteasome subunit beta (280 aa).

Residues 1–53 (MSEYSAGRSGFSPAYLDRVGSSFTDFLAAAAPHLLPGSRPVPQIPVGNVTPHG) constitute a propeptide, removed in mature form; by autocatalysis. The active-site Nucleophile is the threonine 54.

Belongs to the peptidase T1B family. In terms of assembly, the 20S proteasome core is composed of 14 alpha and 14 beta subunits that assemble into four stacked heptameric rings, resulting in a barrel-shaped structure. The two inner rings, each composed of seven catalytic beta subunits, are sandwiched by two outer rings, each composed of seven alpha subunits. The catalytic chamber with the active sites is on the inside of the barrel. Has a gated structure, the ends of the cylinder being occluded by the N-termini of the alpha-subunits. Is capped by the proteasome-associated ATPase, ARC.

It localises to the cytoplasm. The enzyme catalyses Cleavage of peptide bonds with very broad specificity.. The protein operates within protein degradation; proteasomal Pup-dependent pathway. Its activity is regulated as follows. The formation of the proteasomal ATPase ARC-20S proteasome complex, likely via the docking of the C-termini of ARC into the intersubunit pockets in the alpha-rings, may trigger opening of the gate for substrate entry. Interconversion between the open-gate and close-gate conformations leads to a dynamic regulation of the 20S proteasome proteolysis activity. Its function is as follows. Component of the proteasome core, a large protease complex with broad specificity involved in protein degradation. The protein is Proteasome subunit beta of Geodermatophilus obscurus (strain ATCC 25078 / DSM 43160 / JCM 3152 / CCUG 61914 / KCC A-0152 / KCTC 9177 / NBRC 13315 / NRRL B-3577 / G-20).